The primary structure comprises 305 residues: Ornithine carbamoyltransferase (305 aa).

Residues 54–57 (STRT), Gln-81, Arg-105, and 132–135 (HPCQ) contribute to the carbamoyl phosphate site. Residues Asn-163, Asp-220, and 224-225 (SM) each bind L-ornithine. Carbamoyl phosphate contacts are provided by residues 260-261 (CL) and Arg-288.

It belongs to the aspartate/ornithine carbamoyltransferase superfamily. OTCase family.

The protein resides in the cytoplasm. It carries out the reaction carbamoyl phosphate + L-ornithine = L-citrulline + phosphate + H(+). Its pathway is amino-acid biosynthesis; L-arginine biosynthesis; L-arginine from L-ornithine and carbamoyl phosphate: step 1/3. Its function is as follows. Reversibly catalyzes the transfer of the carbamoyl group from carbamoyl phosphate (CP) to the N(epsilon) atom of ornithine (ORN) to produce L-citrulline. The polypeptide is Ornithine carbamoyltransferase (Chromohalobacter salexigens (strain ATCC BAA-138 / DSM 3043 / CIP 106854 / NCIMB 13768 / 1H11)).